Consider the following 140-residue polypeptide: MVGLVYYSSRSGNTARLMERLGLEALRLPQTEPSPEVDAPYVLVTPTFADGEGRGAVPKPVIKFLNNSRNRALLRGVIAGGNRNFGDTFALAGDVIAKKCNVPVLYRFELAGTETDIARMRAGLARFWAAQEQQTCLTQA.

The protein belongs to the NrdI family.

Its function is as follows. Probably involved in ribonucleotide reductase function. This is Protein NrdI from Ruegeria sp. (strain TM1040) (Silicibacter sp.).